Consider the following 642-residue polypeptide: Threonine--tRNA ligase (642 aa).

Residues 1–61 (MPVIRFYDGS…REDAFIEFVD (61 aa)) form the TGS domain. The tract at residues 243 to 534 (DHRKIGKFLQ…LIEECSGNLP (292 aa)) is catalytic. Zn(2+) contacts are provided by cysteine 334, histidine 385, and histidine 511.

Belongs to the class-II aminoacyl-tRNA synthetase family. Homodimer. Requires Zn(2+) as cofactor.

Its subcellular location is the cytoplasm. It catalyses the reaction tRNA(Thr) + L-threonine + ATP = L-threonyl-tRNA(Thr) + AMP + diphosphate + H(+). In terms of biological role, catalyzes the attachment of threonine to tRNA(Thr) in a two-step reaction: L-threonine is first activated by ATP to form Thr-AMP and then transferred to the acceptor end of tRNA(Thr). Also edits incorrectly charged L-seryl-tRNA(Thr). This chain is Threonine--tRNA ligase, found in Buchnera aphidicola subsp. Acyrthosiphon pisum (strain Tuc7).